The chain runs to 349 residues: Histidinol-phosphate aminotransferase (349 aa).

Lysine 206 carries the post-translational modification N6-(pyridoxal phosphate)lysine.

It belongs to the class-II pyridoxal-phosphate-dependent aminotransferase family. Histidinol-phosphate aminotransferase subfamily. Homodimer. Requires pyridoxal 5'-phosphate as cofactor.

The enzyme catalyses L-histidinol phosphate + 2-oxoglutarate = 3-(imidazol-4-yl)-2-oxopropyl phosphate + L-glutamate. Its pathway is amino-acid biosynthesis; L-histidine biosynthesis; L-histidine from 5-phospho-alpha-D-ribose 1-diphosphate: step 7/9. The polypeptide is Histidinol-phosphate aminotransferase (Hydrogenobaculum sp. (strain Y04AAS1)).